The primary structure comprises 362 residues: UDP-N-acetylglucosamine--N-acetylmuramyl-(pentapeptide) pyrophosphoryl-undecaprenol N-acetylglucosamine transferase (362 aa).

UDP-N-acetyl-alpha-D-glucosamine contacts are provided by residues 15-17 (TGG), N127, R165, S191, I247, 266-271 (ALTVSE), and Q292.

The protein belongs to the glycosyltransferase 28 family. MurG subfamily.

It is found in the cell inner membrane. It carries out the reaction di-trans,octa-cis-undecaprenyl diphospho-N-acetyl-alpha-D-muramoyl-L-alanyl-D-glutamyl-meso-2,6-diaminopimeloyl-D-alanyl-D-alanine + UDP-N-acetyl-alpha-D-glucosamine = di-trans,octa-cis-undecaprenyl diphospho-[N-acetyl-alpha-D-glucosaminyl-(1-&gt;4)]-N-acetyl-alpha-D-muramoyl-L-alanyl-D-glutamyl-meso-2,6-diaminopimeloyl-D-alanyl-D-alanine + UDP + H(+). The protein operates within cell wall biogenesis; peptidoglycan biosynthesis. Functionally, cell wall formation. Catalyzes the transfer of a GlcNAc subunit on undecaprenyl-pyrophosphoryl-MurNAc-pentapeptide (lipid intermediate I) to form undecaprenyl-pyrophosphoryl-MurNAc-(pentapeptide)GlcNAc (lipid intermediate II). In Shewanella baltica (strain OS185), this protein is UDP-N-acetylglucosamine--N-acetylmuramyl-(pentapeptide) pyrophosphoryl-undecaprenol N-acetylglucosamine transferase.